Reading from the N-terminus, the 476-residue chain is MAPAGMSLRATILCLLAWAGLAAGDRVYIHPFHLVIHNESTCEQLAKANAGKPKDPTFIPAPIQAKTSPVDEKALQDQLVLVAAKLDTEDKLRAAMVGMLANFLGFRIYGMHSELWGVVHGATVLSPTAVFGTLASLYLGALDHTADRLQAILGVPWKDKNCTSRLDAHKVLSALQAVQGLLVAQGRADSQAQLLLSTVVGVFTAPSLHLKQPFVQGLALYTPVVLPRSLDFTELDVAAEKIDRFMQAVTGWKTGCSLTGASVDSTLAFNTYVHFQGKMKGFSLLAEPQEFWVDNSTSVSVPMLSGMGTFQHWSDIQDNFSVTQVPFTESACLLLIQPHYASDLDKVEGLTFQQNSLNWMKKLSPRTIHLTMPQLVLQGSYDLQDLLAQAELPAILHTELNLQKLSNDRIRVGEVLNSIFFELEADEREPTESTQQLNKPEVLEVTLNRPFLFAVYDQSATALHFLGRVANPLSTA.

Positions 1 to 24 (MAPAGMSLRATILCLLAWAGLAAG) are cleaved as a signal peptide. N-linked (GlcNAc...) asparagine glycosylation is found at Asn-38, Asn-161, Asn-295, and Asn-319. A disulfide bridge connects residues Cys-42 and Cys-162.

Belongs to the serpin family. Post-translationally, in response to low blood pressure, the enzyme renin/REN cleaves angiotensinogen to produce angiotensin-1. Angiotensin-1 is a substrate of ACE (angiotensin converting enzyme) that removes a dipeptide to yield the physiologically active peptide angiotensin-2. Angiotensin-1 and angiotensin-2 can be further processed to generate angiotensin-3, angiotensin-4. Angiotensin 1-9 is cleaved from angiotensin-1 by ACE2 and can be further processed by ACE to produce angiotensin 1-7, angiotensin 1-5 and angiotensin 1-4. Angiotensin 1-7 has also been proposed to be cleaved from angiotensin-2 by ACE2 or from angiotensin-1 by MME (neprilysin). In terms of processing, the disulfide bond is labile. Angiotensinogen is present in the circulation in a near 40:60 ratio with the oxidized disulfide-bonded form, which preferentially interacts with receptor-bound renin.

Its subcellular location is the secreted. Its function is as follows. Essential component of the renin-angiotensin system (RAS), a potent regulator of blood pressure, body fluid and electrolyte homeostasis. In terms of biological role, acts directly on vascular smooth muscle as a potent vasoconstrictor, affects cardiac contractility and heart rate through its action on the sympathetic nervous system, and alters renal sodium and water absorption through its ability to stimulate the zona glomerulosa cells of the adrenal cortex to synthesize and secrete aldosterone. Acts by binding to angiotensin receptors AGTR1 and AGTR2. Also binds the DEAR/FBXW7-AS1 receptor. Stimulates aldosterone release. Functionally, is a ligand for the G-protein coupled receptor MAS1. Has vasodilator and antidiuretic effects. Has an antithrombotic effect that involves MAS1-mediated release of nitric oxide from platelets. The chain is Angiotensinogen (AGT) from Gorilla gorilla gorilla (Western lowland gorilla).